The sequence spans 93 residues: Defensin alpha 4 (93 aa).

Residues 1–19 form the signal peptide; it reads MRTLTLLITLLLLALHTQA. A propeptide spanning residues 20 to 62 is cleaved from the precursor; it reads ESPQERAKAAPDQDMVMEDQDIFISFGGYKGTVLQDAVVKAGQ. 3 disulfides stabilise this stretch: C64–C92, C66–C81, and C71–C91.

Belongs to the alpha-defensin family. In terms of tissue distribution, expressed in neutrophils (at protein level). Highest expression in bone marrow and to a much lesser extent in small intestine.

The protein resides in the secreted. In terms of biological role, host-defense peptide that has antimicrobial activity against Gram-positive and Gram-negative bacteria and fungi (in vitro). Exhibits activity against E.coli, A.calcoaceticus, S,aureus and C.albicans. In Rattus norvegicus (Rat), this protein is Defensin alpha 4.